Here is a 248-residue protein sequence, read N- to C-terminus: Urease accessory protein UreG 1 (248 aa).

Positions 1–14 are enriched in basic and acidic residues; sequence MLPEHHDHGHEHGG. The tract at residues 1-36 is disordered; sequence MLPEHHDHGHEHGGNGHGHGHRHQVNFDPTAAEPDP. 53-60 contributes to the GTP binding site; that stretch reads GPVGSGKT.

The protein belongs to the SIMIBI class G3E GTPase family. UreG subfamily. Homodimer. UreD, UreF and UreG form a complex that acts as a GTP-hydrolysis-dependent molecular chaperone, activating the urease apoprotein by helping to assemble the nickel containing metallocenter of UreC. The UreE protein probably delivers the nickel.

It localises to the cytoplasm. Functionally, facilitates the functional incorporation of the urease nickel metallocenter. This process requires GTP hydrolysis, probably effectuated by UreG. The polypeptide is Urease accessory protein UreG 1 (Saccharopolyspora erythraea (strain ATCC 11635 / DSM 40517 / JCM 4748 / NBRC 13426 / NCIMB 8594 / NRRL 2338)).